The primary structure comprises 160 residues: MSAKAIIEQLKRLCVLHEHLLTLSEEKTEALKAGKTKELSNILTKEQKYIQAITQTEDDRIKTTSAFLGYSENNTISACIAKTSGSEKEELEQLYESLSQVLGRLKKVNEMNRQLTRDALQFISISYDMLVPKENNFNYSKSIKAELPKSSKMKLFDSKA.

Tyr-49 bears the Phosphotyrosine mark.

Functionally, may be involved in the assembly, structure, or function of the flagellum. May polymerize to form a filamentous structure that is part of the flagellum. This is an uncharacterized protein from Bacillus subtilis (strain 168).